A 100-amino-acid polypeptide reads, in one-letter code: Urease subunit gamma (100 aa).

This sequence belongs to the urease gamma subunit family. In terms of assembly, heterotrimer of UreA (gamma), UreB (beta) and UreC (alpha) subunits. Three heterotrimers associate to form the active enzyme.

It localises to the cytoplasm. It carries out the reaction urea + 2 H2O + H(+) = hydrogencarbonate + 2 NH4(+). It participates in nitrogen metabolism; urea degradation; CO(2) and NH(3) from urea (urease route): step 1/1. The polypeptide is Urease subunit gamma (Haemophilus influenzae (strain PittGG)).